A 760-amino-acid chain; its full sequence is Translocation protein SEC63 homolog (760 aa).

At 1 to 14 (MAGQQFQYDDSGNT) the chain is on the lumenal side. A helical membrane pass occupies residues 15-35 (FFYFLTSFVGLIVIPATYYLW). Over 36-69 (PRDQNAEQIRLKNIRKVYGRCMWYRLRLLKPQPN) the chain is Cytoplasmic. Residues 70–90 (IIPTVKKIVLLAGWALFLFLA) traverse the membrane as a helical segment. At 91–188 (YKVSKTDREY…LPAWIVDQKN (98 aa)) the chain is on the lumenal side. The J domain maps to 104-165 (NPYEVLNLDP…ESRKNWEEFG (62 aa)). A helical transmembrane segment spans residues 189–209 (SILVLLVYGLAFMVILPVVVG). Residues 197-541 (GLAFMVILPV…LKKKPTPVLL (345 aa)) form the SEC63 1 domain. Topologically, residues 210–760 (SWWYRSIRYS…EEEEEEEDDD (551 aa)) are cytoplasmic. A disordered region spans residues 492 to 617 (AEEQPAEDGQ…DDEAEWQELQ (126 aa)). The span at 518–536 (KGPKKTAKSKKKKPLKKKP) shows a compositional bias: basic residues. A Phosphothreonine modification is found at Thr537. A compositionally biased stretch (basic and acidic residues) spans 582 to 608 (NRDSQSEKDDGSDRDSDREQDEKQNKD). Positions 597–635 (SDREQDEKQNKDDEAEWQELQQSIQRKERALLETKSKIT) form a coiled coil. Positions 637–714 (PVYSLYFPEE…GLDQIKPLKL (78 aa)) constitute an SEC63 2 domain. Residues 720 to 760 (KPVPENHPQWDTAIEGDEDQEDSEGFEDSFEEEEEEEEDDD) are disordered. Residues 733-760 (IEGDEDQEDSEGFEDSFEEEEEEEEDDD) show a composition bias toward acidic residues. Phosphoserine occurs at positions 742 and 748.

As to quaternary structure, the ER translocon complex consists of channel-forming core components SEC61A1, SEC61B and SEC61G and different auxiliary components such as SEC62 and SEC63. As to expression, widely expressed, with high levels in the liver.

It is found in the endoplasmic reticulum membrane. In terms of biological role, mediates cotranslational and post-translational transport of certain precursor polypeptides across endoplasmic reticulum (ER). Proposed to play an auxiliary role in recognition of precursors with short and apolar signal peptides. May cooperate with SEC62 and HSPA5/BiP to facilitate targeting of small presecretory proteins into the SEC61 channel-forming translocon complex, triggering channel opening for polypeptide translocation to the ER lumen. Required for efficient PKD1/Polycystin-1 biogenesis and trafficking to the plasma membrane of the primary cilia. This Homo sapiens (Human) protein is Translocation protein SEC63 homolog.